We begin with the raw amino-acid sequence, 284 residues long: Pantothenate synthetase (284 aa).

30–37 is a binding site for ATP; sequence MGNLHDGH. The active-site Proton donor is H37. Residue Q61 participates in (R)-pantoate binding. Residue Q61 coordinates beta-alanine. Residue 149 to 152 participates in ATP binding; the sequence is GEKD. Q155 is a binding site for (R)-pantoate. Residues I178 and 186-189 each bind ATP; that span reads LSSR.

Belongs to the pantothenate synthetase family. Homodimer.

The protein resides in the cytoplasm. It catalyses the reaction (R)-pantoate + beta-alanine + ATP = (R)-pantothenate + AMP + diphosphate + H(+). It functions in the pathway cofactor biosynthesis; (R)-pantothenate biosynthesis; (R)-pantothenate from (R)-pantoate and beta-alanine: step 1/1. Functionally, catalyzes the condensation of pantoate with beta-alanine in an ATP-dependent reaction via a pantoyl-adenylate intermediate. The chain is Pantothenate synthetase from Salmonella heidelberg (strain SL476).